The sequence spans 482 residues: Bifunctional protein HldE (482 aa).

The ribokinase stretch occupies residues 1–322 (MFGLESKSPK…QYIHTQPSNL (322 aa)). 198–201 (NKKE) is an ATP binding site. Aspartate 267 is a catalytic residue. The tract at residues 350 to 482 (FTNGCFDILH…IQRSKICKHS (133 aa)) is cytidylyltransferase.

It in the N-terminal section; belongs to the carbohydrate kinase PfkB family. In the C-terminal section; belongs to the cytidylyltransferase family. In terms of assembly, homodimer.

It catalyses the reaction D-glycero-beta-D-manno-heptose 7-phosphate + ATP = D-glycero-beta-D-manno-heptose 1,7-bisphosphate + ADP + H(+). It carries out the reaction D-glycero-beta-D-manno-heptose 1-phosphate + ATP + H(+) = ADP-D-glycero-beta-D-manno-heptose + diphosphate. It participates in nucleotide-sugar biosynthesis; ADP-L-glycero-beta-D-manno-heptose biosynthesis; ADP-L-glycero-beta-D-manno-heptose from D-glycero-beta-D-manno-heptose 7-phosphate: step 1/4. It functions in the pathway nucleotide-sugar biosynthesis; ADP-L-glycero-beta-D-manno-heptose biosynthesis; ADP-L-glycero-beta-D-manno-heptose from D-glycero-beta-D-manno-heptose 7-phosphate: step 3/4. Its pathway is bacterial outer membrane biogenesis; LPS core biosynthesis. In terms of biological role, catalyzes the phosphorylation of D-glycero-D-manno-heptose 7-phosphate at the C-1 position to selectively form D-glycero-beta-D-manno-heptose-1,7-bisphosphate. Functionally, catalyzes the ADP transfer from ATP to D-glycero-beta-D-manno-heptose 1-phosphate, yielding ADP-D-glycero-beta-D-manno-heptose. The protein is Bifunctional protein HldE of Helicobacter hepaticus (strain ATCC 51449 / 3B1).